A 293-amino-acid polypeptide reads, in one-letter code: Diaminopimelate epimerase (293 aa).

Positions 17, 47, and 67 each coordinate substrate. The active-site Proton donor is the cysteine 76. Residues 77 to 78 (GN), asparagine 164, asparagine 197, and 215 to 216 (ER) contribute to the substrate site. Catalysis depends on cysteine 224, which acts as the Proton acceptor. Substrate is bound at residue 225-226 (GS).

This sequence belongs to the diaminopimelate epimerase family. As to quaternary structure, homodimer.

It localises to the cytoplasm. It catalyses the reaction (2S,6S)-2,6-diaminopimelate = meso-2,6-diaminopimelate. It participates in amino-acid biosynthesis; L-lysine biosynthesis via DAP pathway; DL-2,6-diaminopimelate from LL-2,6-diaminopimelate: step 1/1. Catalyzes the stereoinversion of LL-2,6-diaminopimelate (L,L-DAP) to meso-diaminopimelate (meso-DAP), a precursor of L-lysine and an essential component of the bacterial peptidoglycan. In Rhodopseudomonas palustris (strain HaA2), this protein is Diaminopimelate epimerase.